The sequence spans 159 residues: Anaerobic nitrite reductase HB2 (159 aa).

One can recognise a Globin domain in the interval Gly2–Lys152. The short motif at Glu35–Gly39 is the Homodimerization element. Heme b contacts are provided by Ser45, Lys59, His63, and His98. The Homodimerization signature appears at Asp105 to Arg117.

Belongs to the plant globin family. In terms of assembly, homodimer. Heme b is required as a cofactor.

The protein localises to the cytoplasm. The protein resides in the nucleus. The catalysed reaction is Fe(III)-heme b-[protein] + nitric oxide + H2O = Fe(II)-heme b-[protein] + nitrite + 2 H(+). Phytoglobin that reduces nitrite to nitric oxide (NO) under anoxic conditions (e.g. during flooding or in waterlogged soil). May not function as an oxygen storage or transport protein. Has an unusually high affinity for O(2) through an hexacoordinate heme iron because of a very low dissociation constant. This Gossypium hirsutum (Upland cotton) protein is Anaerobic nitrite reductase HB2.